Consider the following 37-residue polypeptide: Hemocyanin subunit B (37 aa).

Belongs to the tyrosinase family. Hemocyanin subfamily. Hemolymph.

The protein localises to the secreted. The protein resides in the extracellular space. Functionally, hemocyanins are copper-containing oxygen carriers occurring freely dissolved in the hemolymph of many mollusks and arthropods. This is Hemocyanin subunit B from Cancer pagurus (Rock crab).